A 965-amino-acid chain; its full sequence is Phosphoenolpyruvate carboxylase 1 (965 aa).

Ser-11 carries the post-translational modification Phosphoserine. His-172 is an active-site residue. 3 residues coordinate D-glucose 6-phosphate: Trp-283, Arg-450, and Asp-597. The active site involves Lys-600. Arg-635 is a binding site for D-glucose 6-phosphate. Residue Arg-641 is part of the active site. L-aspartate is bound at residue Arg-641. Thr-665 is a D-glucose 6-phosphate binding site. L-aspartate is bound at residue Gln-673. Residues Arg-753 and 767 to 769 (RAI) contribute to the D-glucose 6-phosphate site. Positions 829, 888, and 963 each coordinate L-aspartate.

It belongs to the PEPCase type 1 family. In terms of assembly, homotetramer. It depends on Mg(2+) as a cofactor. As to expression, expressed in roots and stems and at low levels in leaves. Preferentially expressed in the phloem and in root tips.

The protein resides in the cytoplasm. The catalysed reaction is oxaloacetate + phosphate = phosphoenolpyruvate + hydrogencarbonate. Its activity is regulated as follows. Activated by the allosteric regulator glucose-6-phosphate. Inhibited by malate and aspartate. Up regulated by light-reversible phosphorylation. Functionally, through the carboxylation of phosphoenolpyruvate (PEP) it forms oxaloacetate, a four-carbon dicarboxylic acid source for the tricarboxylic acid cycle. May be involved in phloem loading with sucrose and in anions and cations uptake and amino acid biosynthesis in roots. The protein is Phosphoenolpyruvate carboxylase 1 of Flaveria trinervia (Clustered yellowtops).